The following is a 272-amino-acid chain: 2-dehydro-3-deoxyphosphooctonate aldolase (272 aa).

The protein belongs to the KdsA family.

Its subcellular location is the cytoplasm. It catalyses the reaction D-arabinose 5-phosphate + phosphoenolpyruvate + H2O = 3-deoxy-alpha-D-manno-2-octulosonate-8-phosphate + phosphate. The protein operates within carbohydrate biosynthesis; 3-deoxy-D-manno-octulosonate biosynthesis; 3-deoxy-D-manno-octulosonate from D-ribulose 5-phosphate: step 2/3. Its pathway is bacterial outer membrane biogenesis; lipopolysaccharide biosynthesis. In Geotalea uraniireducens (strain Rf4) (Geobacter uraniireducens), this protein is 2-dehydro-3-deoxyphosphooctonate aldolase.